Reading from the N-terminus, the 309-residue chain is UDP-3-O-acyl-N-acetylglucosamine deacetylase (309 aa).

Positions 78, 235, and 239 each coordinate Zn(2+). The active-site Proton donor is His262.

Belongs to the LpxC family. Zn(2+) is required as a cofactor.

It catalyses the reaction a UDP-3-O-[(3R)-3-hydroxyacyl]-N-acetyl-alpha-D-glucosamine + H2O = a UDP-3-O-[(3R)-3-hydroxyacyl]-alpha-D-glucosamine + acetate. It participates in glycolipid biosynthesis; lipid IV(A) biosynthesis; lipid IV(A) from (3R)-3-hydroxytetradecanoyl-[acyl-carrier-protein] and UDP-N-acetyl-alpha-D-glucosamine: step 2/6. Functionally, catalyzes the hydrolysis of UDP-3-O-myristoyl-N-acetylglucosamine to form UDP-3-O-myristoylglucosamine and acetate, the committed step in lipid A biosynthesis. In Syntrophotalea carbinolica (strain DSM 2380 / NBRC 103641 / GraBd1) (Pelobacter carbinolicus), this protein is UDP-3-O-acyl-N-acetylglucosamine deacetylase.